Reading from the N-terminus, the 184-residue chain is Probable DNA-directed RNA polymerase subunit delta (184 aa).

Residues 14–81 (LSMIEVARAI…GENVWALRSW (68 aa)) form the HTH HARE-type domain. 2 disordered regions span residues 88 to 107 (DEEV…KHHK) and 118 to 184 (GDDD…DEDD). Residues 118 to 164 (GDDDIIDYDNDDPEDDDLDAATDDSDDDYSDDDSDYDEDNDDADDVL) are compositionally biased toward acidic residues.

Belongs to the RpoE family. In terms of assembly, RNAP is composed of a core of 2 alpha, a beta and a beta' subunits. The core is associated with a delta subunit and one of several sigma factors.

Its function is as follows. Participates in both the initiation and recycling phases of transcription. In the presence of the delta subunit, RNAP displays an increased specificity of transcription, a decreased affinity for nucleic acids, and an increased efficiency of RNA synthesis because of enhanced recycling. The polypeptide is Probable DNA-directed RNA polymerase subunit delta (Lactobacillus acidophilus (strain ATCC 700396 / NCK56 / N2 / NCFM)).